The following is a 296-amino-acid chain: NAD kinase (296 aa).

The active-site Proton acceptor is the Asp-72. Residues 72–73, 146–147, Arg-157, Lys-174, Asp-176, 187–192, and Gln-247 contribute to the NAD(+) site; these read DG, ND, and TAYALS.

The protein belongs to the NAD kinase family. It depends on a divalent metal cation as a cofactor.

The protein resides in the cytoplasm. It carries out the reaction NAD(+) + ATP = ADP + NADP(+) + H(+). Its function is as follows. Involved in the regulation of the intracellular balance of NAD and NADP, and is a key enzyme in the biosynthesis of NADP. Catalyzes specifically the phosphorylation on 2'-hydroxyl of the adenosine moiety of NAD to yield NADP. The chain is NAD kinase from Pseudomonas putida (strain W619).